Consider the following 464-residue polypeptide: UDP-glycosyltransferase 76F2 (464 aa).

UDP-alpha-D-glucose contacts are provided by residues S279, 338 to 340 (VNQ), 355 to 363 (HCGWNSTIE), and 377 to 380 (FSDQ).

This sequence belongs to the UDP-glycosyltransferase family.

This Arabidopsis thaliana (Mouse-ear cress) protein is UDP-glycosyltransferase 76F2 (UGT76F2).